The following is a 246-amino-acid chain: 3-deoxy-manno-octulosonate cytidylyltransferase (246 aa).

It belongs to the KdsB family.

Its subcellular location is the cytoplasm. The catalysed reaction is 3-deoxy-alpha-D-manno-oct-2-ulosonate + CTP = CMP-3-deoxy-beta-D-manno-octulosonate + diphosphate. It functions in the pathway nucleotide-sugar biosynthesis; CMP-3-deoxy-D-manno-octulosonate biosynthesis; CMP-3-deoxy-D-manno-octulosonate from 3-deoxy-D-manno-octulosonate and CTP: step 1/1. The protein operates within bacterial outer membrane biogenesis; lipopolysaccharide biosynthesis. Functionally, activates KDO (a required 8-carbon sugar) for incorporation into bacterial lipopolysaccharide in Gram-negative bacteria. This Rickettsia conorii (strain ATCC VR-613 / Malish 7) protein is 3-deoxy-manno-octulosonate cytidylyltransferase.